We begin with the raw amino-acid sequence, 188 residues long: Archaemetzincin (188 aa).

Zn(2+) is bound at residue H137. The active-site Proton acceptor is E138. Zn(2+) is bound by residues H141, H147, C148, C153, C172, and C175.

It belongs to the peptidase M54 family. In terms of assembly, monomer. It depends on Zn(2+) as a cofactor.

Functionally, probable zinc metalloprotease whose natural substrate is unknown. The protein is Archaemetzincin of Pyrococcus abyssi (strain GE5 / Orsay).